We begin with the raw amino-acid sequence, 305 residues long: Ribosomal RNA small subunit methyltransferase H (305 aa).

S-adenosyl-L-methionine-binding positions include 37–39 (GGH), aspartate 57, phenylalanine 85, aspartate 101, and histidine 108.

Belongs to the methyltransferase superfamily. RsmH family.

It is found in the cytoplasm. The enzyme catalyses cytidine(1402) in 16S rRNA + S-adenosyl-L-methionine = N(4)-methylcytidine(1402) in 16S rRNA + S-adenosyl-L-homocysteine + H(+). Functionally, specifically methylates the N4 position of cytidine in position 1402 (C1402) of 16S rRNA. The chain is Ribosomal RNA small subunit methyltransferase H from Parabacteroides distasonis (strain ATCC 8503 / DSM 20701 / CIP 104284 / JCM 5825 / NCTC 11152).